The following is a 217-amino-acid chain: Urease accessory protein UreE (217 aa).

The segment at 148-217 (AYGEAAAHGH…DHDHGSGHHH (70 aa)) is disordered. Positions 160–171 (AGHDHAHDHDHG) are enriched in basic and acidic residues. The segment covering 193–202 (AAAPAPHVHG) has biased composition (low complexity). Over residues 206–217 (GHDHDHGSGHHH) the composition is skewed to basic and acidic residues.

It belongs to the UreE family.

It localises to the cytoplasm. Functionally, involved in urease metallocenter assembly. Binds nickel. Probably functions as a nickel donor during metallocenter assembly. This Methylibium petroleiphilum (strain ATCC BAA-1232 / LMG 22953 / PM1) protein is Urease accessory protein UreE.